The primary structure comprises 1928 residues: Lactase/phlorizin hydrolase (1928 aa).

An N-terminal signal peptide occupies residues 1 to 21; sequence MELPWTALFLSTVLLGLSCQG. Residues 22–867 constitute a propeptide, XBetaGly; it reads SDWESDRNFI…LPVRADFTSR (846 aa). The Extracellular portion of the chain corresponds to 22-1883; that stretch reads SDWESDRNFI…LMLGIAEAQT (1862 aa). The segment at 46–289 is glycosyl hydrolase-1 1; Region I; that stretch reads NYPPGKQGSD…FIYTLKLEDC (244 aa). A glycosyl hydrolase-1 2; Region II region spans residues 364–856; it reads VWAAFANQSR…GFSAKKVKRN (493 aa). N-linked (GlcNAc...) asparagine glycans are attached at residues Asn-370, Asn-514, Asn-824, Asn-936, Asn-948, Asn-991, and Asn-1037. The tract at residues 904–1367 is glycosyl hydrolase-1 3; Region III. Phlorizin hydrolase/Glycosylceramidase activity; sequence RFRDDFLWGV…DLIANNGMPL (464 aa). The Proton donor; for phlorizin hydrolase/Glycosylceramidase activity role is filled by Glu-1067. N-linked (GlcNAc...) asparagine glycans are attached at residues Asn-1176 and Asn-1240. The active-site Nucleophile; for phlorizin hydrolase/Glycosylceramidase activity is Glu-1274. Residues Asn-1281 and Asn-1509 are each glycosylated (N-linked (GlcNAc...) asparagine). Residues 1374–1847 form a glycosyl hydrolase-1 4; Region IV. Lactase activity region; that stretch reads LYGEFPKGFI…CNGFPDPAQG (474 aa). Glu-1539 functions as the Proton donor; for lactase activity in the catalytic mechanism. N-linked (GlcNAc...) asparagine glycosylation is found at Asn-1657 and Asn-1684. The active-site Nucleophile; for lactase activity is the Glu-1750. Asn-1762 and Asn-1815 each carry an N-linked (GlcNAc...) asparagine glycan. The helical transmembrane segment at 1884-1902 threads the bilayer; the sequence is ALYVLFALLLLGACSLAFL. The Cytoplasmic segment spans residues 1903-1928; the sequence is TYNTGRRSKQGNAQPSQHQLSPISSF.

Belongs to the glycosyl hydrolase 1 family. Homodimer. Post-translationally, N-glycosylated. In terms of tissue distribution, intestine.

Its subcellular location is the apical cell membrane. The catalysed reaction is lactose + H2O = beta-D-galactose + D-glucose. It catalyses the reaction phlorizin + H2O = phloretin + beta-D-glucose. It carries out the reaction D-cellobiose + H2O = beta-D-glucose + D-glucose. The enzyme catalyses quercetin 4'-O-beta-D-glucoside + H2O = quercetin + beta-D-glucose. The catalysed reaction is quercetin 3-O-beta-D-glucoside + H2O = quercetin + beta-D-glucose. It catalyses the reaction kaempferol 3-O-beta-D-glucoside + H2O = kaempferol + beta-D-glucose. It carries out the reaction luteolin 7-O-beta-D-glucoside + H2O = luteolin + beta-D-glucose. The enzyme catalyses luteolin 4'-O-beta-D-glucoside + H2O = luteolin + beta-D-glucose. The catalysed reaction is (2S)-naringenin 7-O-beta-D-glucoside + H2O = (2S)-naringenin + beta-D-glucose. It catalyses the reaction eriodictyol-7-O-beta-D-glucoside + H2O = (S)-eriodictyol + beta-D-glucose. It carries out the reaction apigenin 7-O-beta-D-glucoside + H2O = apigenin + beta-D-glucose. The enzyme catalyses daidzein 7-O-beta-D-glucoside + H2O = daidzein + beta-D-glucose + H(+). The catalysed reaction is genistein 7-O-beta-D-glucoside + H2O = genistein + beta-D-glucose. It catalyses the reaction a beta-D-galactosyl-N-acylsphingosine + H2O = a ceramide + beta-D-galactose.. It carries out the reaction beta-D-glucosyl-(1&lt;-&gt;1')-N-hexadecanoylsphing-4-enine + H2O = N-hexadecanoylsphing-4-enine + beta-D-glucose. The enzyme catalyses beta-D-galactosyl-(1&lt;-&gt;1')-N-hexadecanoylsphing-4-enine + H2O = beta-D-galactose + N-hexadecanoylsphing-4-enine. The catalysed reaction is beta-D-galactosyl-(1&lt;-&gt;1')-N-hexadecanoylsphinganine + H2O = N-hexadecanoylsphinganine + beta-D-galactose. It catalyses the reaction beta-D-glucosyl-(1&lt;-&gt;1')-N-hexadecanoylsphinganine + H2O = N-hexadecanoylsphinganine + beta-D-glucose. Broad specificity glycosidase of the intestinal brush border membrane that hydrolyzes lactose, the main sugar in mammalian milk, to produce D-glucose and D-galactose. The mature protein is composed of two domains that catalyze the hydrolysis of beta-glucopyranosides and beta-galactopyranosides, with a preference for hydrophilic aglycones (in lactose and cellobiose) for one domain and hydrophobic aglycones (in phlorizin and glycosylceramides) for the other. This chain is Lactase/phlorizin hydrolase, found in Rattus norvegicus (Rat).